The sequence spans 745 residues: Copper-exporting P-type ATPase B (745 aa).

The segment at 1–76 (MNNGIDPENE…GMDHSHMDHE (76 aa)) is disordered. The Cytoplasmic portion of the chain corresponds to 1-108 (MNNGIDPENE…HMGNFKQKFW (108 aa)). The span at 36–76 (LQEHGKMENMDQHHTHGHMERHQQMDHGHMSGMDHSHMDHE) shows a compositional bias: basic and acidic residues. A run of 3 repeats spans residues 60 to 71 (MDHGHMSGMDHS), 73 to 84 (MDHEDMSGMNHS), and 86 to 97 (MGHENMSGMDHS). The interval 60–97 (MDHGHMSGMDHSHMDHEDMSGMNHSHMGHENMSGMDHS) is 3 X 12 AA approximate repeats. A helical membrane pass occupies residues 109–128 (LSLILAIPIILFSPMMGMSF). The Extracellular segment spans residues 129 to 139 (PFQVTFPGSNW). A helical membrane pass occupies residues 140-160 (VVLVLATILFIYGGQPFLSGA). At 161-170 (KMELKQKSPA) the chain is on the cytoplasmic side. The chain crosses the membrane as a helical span at residues 171 to 191 (MMTLIAMGITVAYVYSVYSFI). Residues 192–200 (ANLINPHTH) are Extracellular-facing. Residues 201-217 (VMDFFWELATLIVIMLL) form a helical membrane-spanning segment. At 218-359 (GHWIEMNAVS…EFLSDKVAKW (142 aa)) the chain is on the cytoplasmic side. A helical transmembrane segment spans residues 360–379 (LFYVALVVGIIAFIAWLFLA). At 380 to 388 (NLPDALERM) the chain is on the extracellular side. The helical transmembrane segment at 389 to 409 (VTVFIIACPHALGLAIPLVVA) threads the bilayer. Residues 410–703 (RSTSIAAKNG…QNLWWGAGYN (294 aa)) lie on the Cytoplasmic side of the membrane. Residue aspartate 440 is the 4-aspartylphosphate intermediate of the active site. The Mg(2+) site is built by aspartate 638 and aspartate 642. The chain crosses the membrane as a helical span at residues 704-721 (IIAIPLAAGILAPIGLIL). Residues 722–723 (SP) lie on the Extracellular side of the membrane. A helical membrane pass occupies residues 724-744 (AVGAVLMSLSTVVVALNALTL). Position 745 (lysine 745) is a topological domain, cytoplasmic.

The protein belongs to the cation transport ATPase (P-type) (TC 3.A.3) family. Type IB subfamily. Monomer.

Its subcellular location is the cell membrane. It carries out the reaction Cu(+)(in) + ATP + H2O = Cu(+)(out) + ADP + phosphate + H(+). With respect to regulation, inhibited by vanadate. Functionally, involved in copper export. Can also export silver. This is Copper-exporting P-type ATPase B (copB) from Enterococcus hirae (strain ATCC 9790 / DSM 20160 / JCM 8729 / LMG 6399 / NBRC 3181 / NCIMB 6459 / NCDO 1258 / NCTC 12367 / WDCM 00089 / R).